The sequence spans 164 residues: UPF0251 protein MA_0157 (164 aa).

Positions 91 to 124 (GDYRMPRGDGTGPAGQGPVGGGRSRGQGKGRGGR) are disordered. The span at 99 to 115 (DGTGPAGQGPVGGGRSR) shows a compositional bias: gly residues.

It belongs to the UPF0251 family.

The sequence is that of UPF0251 protein MA_0157 from Methanosarcina acetivorans (strain ATCC 35395 / DSM 2834 / JCM 12185 / C2A).